We begin with the raw amino-acid sequence, 583 residues long: Radixin (583 aa).

The region spanning 5–295 (INVRVTTMDA…GNHELYMRRR (291 aa)) is the FERM domain. 60–63 (KLNK) is an a 1,2-diacyl-sn-glycero-3-phospho-(1D-myo-inositol) binding site. Residue lysine 83 is modified to N6-succinyllysine. Residue lysine 278 participates in a 1,2-diacyl-sn-glycero-3-phospho-(1D-myo-inositol) binding. 3 disordered regions span residues 309–336 (AREEKHQKQLERAQLENEKKKREIAEKE), 374–407 (ELDQERKRAKEEAERLEKERQAAEEAKSALAKQA), and 460–526 (KEEL…RVKK). Residues 374-400 (ELDQERKRAKEEAERLEKERQAAEEAK) show a composition bias toward basic and acidic residues. The span at 469 to 480 (APPPPPPPPVIP) shows a compositional bias: pro residues. Basic and acidic residues-rich tracts occupy residues 483-492 (ENEHDEHDEN) and 506-525 (MNHRSEEERVTETQKNERVK). Position 564 is a phosphothreonine; by ROCK2 (threonine 564).

As to quaternary structure, interacts with CPNE1 (via VWFA domain) and CPNE4 (via VWFA domain). Binds NHERF1. Interacts with NHERF1, NHERF2, LAYN, MME/NEP and ICAM2. Interacts (via FERM domain) with SPN/CD43 cytoplasmic tail. Interacts with CD44. Interacts with CLIC5; may work together in a complex which also includes EZR and MYO6 to stabilize linkages between the plasma membrane and subjacent actin cytoskeleton at the base of stereocilia. Phosphorylated by tyrosine-protein kinases. Phosphorylation by ROCK2 suppresses the head-to-tail association of the N-terminal and C-terminal halves resulting in an opened conformation which is capable of actin and membrane-binding.

The protein resides in the cell membrane. Its subcellular location is the cytoplasm. It is found in the cytoskeleton. The protein localises to the cleavage furrow. It localises to the cell projection. The protein resides in the microvillus. Its subcellular location is the stereocilium. Its activity is regulated as follows. A head-to-tail association, of the N-terminal and C-terminal halves results in a closed conformation (inactive form) which is incapable of actin or membrane-binding. Its function is as follows. Probably plays a crucial role in the binding of the barbed end of actin filaments to the plasma membrane. The sequence is that of Radixin (RDX) from Bos taurus (Bovine).